The chain runs to 353 residues: uncharacterized protein (353 aa).

A signal peptide spans 1–18 (MKFVLFAQLAAVAAPAIA). The tract at residues 94–119 (EGGNVRRVPGGPSQSARQIGDSSTPM) is disordered. Polar residues predominate over residues 105-119 (PSQSARQIGDSSTPM). N-linked (GlcNAc...) asparagine glycans are attached at residues Asn-165 and Asn-312.

This sequence belongs to the glycosyl hydrolase 3 family.

The protein resides in the secreted. This is an uncharacterized protein from Arthroderma benhamiae (strain ATCC MYA-4681 / CBS 112371) (Trichophyton mentagrophytes).